Consider the following 322-residue polypeptide: Cytochrome f (322 aa).

Positions 1-35 (MQNRNIFSWVKEQTTRSISVSIMILIYVITWTSIS) are cleaved as a signal peptide. The heme site is built by Tyr-38, Cys-58, Cys-61, and His-62. A helical transmembrane segment spans residues 288-308 (VQGLFFFFASVILAQIFLVLK).

This sequence belongs to the cytochrome f family. The 4 large subunits of the cytochrome b6-f complex are cytochrome b6, subunit IV (17 kDa polypeptide, petD), cytochrome f and the Rieske protein, while the 4 small subunits are PetG, PetL, PetM and PetN. The complex functions as a dimer. It depends on heme as a cofactor.

Its subcellular location is the plastid. It is found in the chloroplast thylakoid membrane. Functionally, component of the cytochrome b6-f complex, which mediates electron transfer between photosystem II (PSII) and photosystem I (PSI), cyclic electron flow around PSI, and state transitions. The protein is Cytochrome f of Nandina domestica (Heavenly bamboo).